We begin with the raw amino-acid sequence, 490 residues long: Aspartyl/glutamyl-tRNA(Asn/Gln) amidotransferase subunit B (490 aa).

The protein belongs to the GatB/GatE family. GatB subfamily. As to quaternary structure, heterotrimer of A, B and C subunits.

The enzyme catalyses L-glutamyl-tRNA(Gln) + L-glutamine + ATP + H2O = L-glutaminyl-tRNA(Gln) + L-glutamate + ADP + phosphate + H(+). It carries out the reaction L-aspartyl-tRNA(Asn) + L-glutamine + ATP + H2O = L-asparaginyl-tRNA(Asn) + L-glutamate + ADP + phosphate + 2 H(+). Functionally, allows the formation of correctly charged Asn-tRNA(Asn) or Gln-tRNA(Gln) through the transamidation of misacylated Asp-tRNA(Asn) or Glu-tRNA(Gln) in organisms which lack either or both of asparaginyl-tRNA or glutaminyl-tRNA synthetases. The reaction takes place in the presence of glutamine and ATP through an activated phospho-Asp-tRNA(Asn) or phospho-Glu-tRNA(Gln). The polypeptide is Aspartyl/glutamyl-tRNA(Asn/Gln) amidotransferase subunit B (Prochlorococcus marinus subsp. pastoris (strain CCMP1986 / NIES-2087 / MED4)).